We begin with the raw amino-acid sequence, 300 residues long: U6 snRNA methylphosphate capping enzyme Amus (300 aa).

Positions 1–12 (MDLENNNNTPLT) are enriched in polar residues. 2 disordered regions span residues 1-21 (MDLE…KCAK) and 34-68 (VESK…GKPM). Residues 34–44 (VESKRLKKEES) are compositionally biased toward basic and acidic residues. The Bin3-type SAM domain occupies 95–300 (DIRLDVLGTQ…KRPIQIFTKS (206 aa)). S-adenosyl-L-methionine is bound by residues Asn119 and Asp140.

The protein belongs to the methyltransferase superfamily.

The protein localises to the nucleus. Functionally, probable S-adenosyl-L-methionine-dependent methyltransferase that binds and stabilizes U6 snRNA, probably by adding a methylphosphate cap at its 5'-end. Required for U6 stability, but not stability of 7SK snRNAs, other miRNAs or tRNAs. U6 stabilization is required for efficient pre-mRNA splicing. Essential for organismal and germline development. This Drosophila melanogaster (Fruit fly) protein is U6 snRNA methylphosphate capping enzyme Amus.